The primary structure comprises 446 residues: MSQTKKDQPKGNLAWWQLSLIGVGCTIGTGFFLGSSIAIVKSGFSVLLSFLIAGIGTYFVFEQLAKLSAKQPEKGSFCAYARKAFGKWAGFSNGWVYWTSEMLITGSQLTAISLFTKHWFPQVPLWVFASIYAVLGLLIIFTGLSVFEKTENVLAVIKTAAIFMFIVIAILALCGILSGGNHGIHVPNKTSEFFPYGAMGLWTGLIYAFYAFGGIEVMGLMAVHLKKPEEASKSGKLMLATLAIIYIISIGLALLLVPLHTFTEQDSPFITSLKGYNLEIILDIFNGIFIIAGFSTLVASLFAVTTLLCTMADDGDAPKCFTLKEGKKICWPALGLTFAGLVLSIILSLVLPKNIYEHMTTAAGLMLLYTWLFILFSSKKLTDPEGMGKTQIYLAMVLIAAAVSGTLFEKSSRPGFFVSIGFLVIIAIVTMIYQKKQGHKDRPASP.

The next 12 helical transmembrane spans lie at 20 to 40, 42 to 62, 95 to 115, 127 to 147, 160 to 180, 205 to 225, 237 to 257, 284 to 304, 331 to 351, 355 to 375, 388 to 408, and 414 to 434; these read LIGV…IAIV, SGFS…FVFE, WVYW…ISLF, VFAS…LSVF, AAIF…LSGG, LIYA…AVHL, LMLA…LLLV, IFNG…LFAV, WPAL…SLVL, IYEH…LFIL, GKTQ…GTLF, and PGFF…MIYQ.

Belongs to the amino acid-polyamine-organocation (APC) superfamily.

The protein resides in the cell membrane. This is an uncharacterized protein from Bacillus subtilis (strain 168).